Here is a 308-residue protein sequence, read N- to C-terminus: D-alanine--D-alanine ligase (308 aa).

The 200-residue stretch at 103–302 (KTVMATAGVP…FDELVQWMVE (200 aa)) folds into the ATP-grasp domain. 130-184 (MAPPYVIKPVADGSSVGVFMVTEAHEHPPQELFRDDWPHGEQLLVEKYVAGKELT) provides a ligand contact to ATP. Residues aspartate 252, glutamate 269, and asparagine 271 each coordinate Mg(2+).

Belongs to the D-alanine--D-alanine ligase family. Mg(2+) serves as cofactor. It depends on Mn(2+) as a cofactor.

It localises to the cytoplasm. The enzyme catalyses 2 D-alanine + ATP = D-alanyl-D-alanine + ADP + phosphate + H(+). The protein operates within cell wall biogenesis; peptidoglycan biosynthesis. Cell wall formation. This is D-alanine--D-alanine ligase from Rhodopseudomonas palustris (strain BisB18).